A 195-amino-acid polypeptide reads, in one-letter code: Neurturin (195 aa).

The N-terminal stretch at 1 to 19 (MRRWKAAALVSLICSSLLS) is a signal peptide. A propeptide spanning residues 20–95 (VWMCQEGLLL…RAGPRRRRAR (76 aa)) is cleaved from the precursor. Cystine bridges form between Cys101-Cys163, Cys128-Cys192, and Cys132-Cys194. Positions 147, 156, and 158 each coordinate heparan sulfate group.

This sequence belongs to the TGF-beta family. GDNF subfamily. As to quaternary structure, homodimer; disulfide-linked. Interacts with GFRA2 coreceptor and RET: forms a 2:2:2 ternary complex composed of NRTN ligand, GFRA2 and RET receptor. Also forms a 4:4:4 tetrameric complex composed of 4 copies of NRTN ligand, GFRA2 and RET receptor, which prevents endocytosis of RET. In terms of tissue distribution, widespread distribution.

It localises to the secreted. In terms of biological role, growth factor that supports the survival of sympathetic neurons in culture. May regulate the development and maintenance of the CNS. Involved in the development of the neural crest. Might control the size of non-neuronal cell population such as haemopoietic cells. Acts by binding to its coreceptor, GFRA2, leading to autophosphorylation and activation of the RET receptor. Heparan sulfate-binding is required for signaling. The protein is Neurturin (Nrtn) of Mus musculus (Mouse).